The primary structure comprises 68 residues: Large ribosomal subunit protein bL35 (68 aa).

It belongs to the bacterial ribosomal protein bL35 family.

The protein is Large ribosomal subunit protein bL35 of Wolbachia pipientis wMel.